The following is a 798-amino-acid chain: MERIYLLLLLFLPRIRSYDVRSVTTSWGMVRGEVVSPEGDDLPPVAQYLGIPYGVAPTGQYRFNMAISAAKWTHMPKDARKVSPVCIQTDMPELSETKAFKHTSAQRFDFNHRLLPHLKKQSEDCLYMNIYVPERLEISRDNYLPVMVIVHGEEYGWGTGNAFNGTTLAAYGHIIVVTLNYRLGVFGFLGRCESSSCSGNSGISDLVSALTMLNVILPSFGGDSKSVTLAGWGSGASLVSLLMASPLTQPGRRLFRRAILLDGSALSPWAISQNPQQYFMQLAEELACAPKNRTSSFNDNVDTIVRCMQVHSSENITKAVLKIDVPTFLSGFAPIVDGQLIPNKPQVSFSTQYGSLFREIDLLVGISSNPSHHMISNEDLKVGISKEKRMRIFRSLVRNLYDFHREEILASIINEYTDWENPRDHPKSIRNGVLNALSDVLYTAPLIETLRSHSADEVRKEANTFMFAFAHETRSWSQEQPNSGIRGSLSGDIVPYIFGYPLAQGDSEERLYSGFNTDDKGISKVMMHYVSNFVKSGDPSKPNPMSKNFPMGDVFHSTAWPQFDQPNREAYLEITDRPRVKNYYRNAQVGFWNNFIPQLHKNGKETEPVGEEHHLLSDHFRKDSYFGKTRHFSSYANLPFPPPPMPPSPPPELTTKPKPSESPTTLQTTTESEKAAAGSFTGKALGGVIFIGCGFLIMNVCLLIAVRREWGKKRRNEKKFQLQYQTYNSNHGGGAEQYNSLNSPEPLLSASHKNSTSMRPAGISPTCPRHGRAALALQNSRGNSLTAAQAPTLEEIQV.

A signal peptide spans 1-17; the sequence is MERIYLLLLLFLPRIRS. Residues 18-685 are Extracellular-facing; that stretch reads YDVRSVTTSW…AAGSFTGKAL (668 aa). A disulfide bridge links cysteine 86 with cysteine 125. 3 N-linked (GlcNAc...) asparagine glycosylation sites follow: asparagine 164, asparagine 292, and asparagine 315. A disulfide bridge links cysteine 288 with cysteine 307. Residues 636-676 are disordered; it reads ANLPFPPPPMPPSPPPELTTKPKPSESPTTLQTTTESEKAA. Residues 639-652 are compositionally biased toward pro residues; it reads PFPPPPMPPSPPPE. The span at 653 to 665 shows a compositional bias: low complexity; that stretch reads LTTKPKPSESPTT. A helical membrane pass occupies residues 686 to 706; the sequence is GGVIFIGCGFLIMNVCLLIAV. At 707 to 798 the chain is on the cytoplasmic side; it reads RREWGKKRRN…QAPTLEEIQV (92 aa). Residues 731–765 are disordered; it reads HGGGAEQYNSLNSPEPLLSASHKNSTSMRPAGISP.

This sequence belongs to the type-B carboxylesterase/lipase family. As to quaternary structure, interacts (via extracellular domain) with isoform b of madd-4; the interaction is required for the localization to postsynaptic domains. Interacts with unc-49.

The protein resides in the cell membrane. It is found in the synapse. In terms of biological role, probable neuronal cell surface protein thought to be involved in cell-cell-interactions by forming intercellular junctions through binding to beta-neurexins. Plays a role in the clustering of the GABA(A) receptor unc-49 at postsynaptic sites in neuromuscular junctions (NMJs) via the interaction with madd-4 and neurexin nrx-1 and is thereby required for normal GABAergic synaptic transmission. The chain is Neuroligin-1 (nlg-1) from Caenorhabditis elegans.